A 138-amino-acid polypeptide reads, in one-letter code: Large ribosomal subunit protein bL17 (138 aa).

It belongs to the bacterial ribosomal protein bL17 family. In terms of assembly, part of the 50S ribosomal subunit. Contacts protein L32.

This chain is Large ribosomal subunit protein bL17, found in Methylorubrum extorquens (strain CM4 / NCIMB 13688) (Methylobacterium extorquens).